We begin with the raw amino-acid sequence, 520 residues long: Amine oxidase [flavin-containing] B (520 aa).

Ser-2 is subject to N-acetylserine. The Cytoplasmic segment spans residues 2 to 489 (SSKCDVVVVG…TFLQRHLPSV (488 aa)). N6-acetyllysine is present on Lys-52. Cys-397 is modified (S-8alpha-FAD cysteine). Residues 490 to 516 (PGLLKLIGLTTIFSATALGFLAHKRGL) form a helical; Anchor for type IV membrane protein membrane-spanning segment. The Mitochondrial intermembrane portion of the chain corresponds to 517–520 (LVRI).

As to quaternary structure, monomer, homo- or heterodimer (containing two subunits of similar size). Each subunit contains a covalently bound flavin. Enzymatically active as monomer. It depends on FAD as a cofactor.

The protein resides in the mitochondrion outer membrane. The catalysed reaction is a secondary aliphatic amine + O2 + H2O = a primary amine + an aldehyde + H2O2. The enzyme catalyses a primary methyl amine + O2 + H2O = an aldehyde + H2O2 + NH4(+). It carries out the reaction benzylamine + O2 + H2O = benzaldehyde + H2O2 + NH4(+). It catalyses the reaction (R)-adrenaline + O2 + H2O = (R)-3,4-dihydroxymandelaldehyde + methylamine + H2O2. The catalysed reaction is dopamine + O2 + H2O = 3,4-dihydroxyphenylacetaldehyde + H2O2 + NH4(+). The enzyme catalyses tyramine + O2 + H2O = (4-hydroxyphenyl)acetaldehyde + H2O2 + NH4(+). It carries out the reaction (R)-noradrenaline + O2 + H2O = (R)-3,4-dihydroxymandelaldehyde + H2O2 + NH4(+). It catalyses the reaction 2-phenylethylamine + O2 + H2O = 2-phenylacetaldehyde + H2O2 + NH4(+). The catalysed reaction is N-acetylputrescine + O2 + H2O = 4-acetamidobutanal + H2O2 + NH4(+). Its function is as follows. Catalyzes the oxidative deamination of primary and some secondary amines such as neurotransmitters, and exogenous amines including the tertiary amine, neurotoxin 1-methyl-4-phenyl-1,2,3,6-tetrahydropyridine (MPTP), with concomitant reduction of oxygen to hydrogen peroxide and participates in the metabolism of neuroactive and vasoactive amines in the central nervous system and peripheral tissues. Preferentially degrades benzylamine and phenylethylamine. The polypeptide is Amine oxidase [flavin-containing] B (Bos taurus (Bovine)).